Reading from the N-terminus, the 22-residue chain is Unknown protein from spot 168 of 2D-PAGE of etiolated coleoptile (22 aa).

The polypeptide is Unknown protein from spot 168 of 2D-PAGE of etiolated coleoptile (Zea mays (Maize)).